A 588-amino-acid chain; its full sequence is Glutamyl-tRNA(Gln) amidotransferase subunit B, mitochondrial (588 aa).

The N-terminal 109 residues, 1–109 (MLRSWIGSGT…RAPTSTSETP (109 aa)), are a transit peptide targeting the mitochondrion. The span at 22-35 (SSLPSPKASFSSAP) shows a compositional bias: low complexity. Residues 22–50 (SSLPSPKASFSSAPNRYLQPPTSADRVPL) are disordered.

The protein belongs to the GatB/GatE family. GatB subfamily. In terms of assembly, subunit of the heterotrimeric GatCAB amidotransferase (AdT) complex, composed of A, B and C subunits.

It is found in the mitochondrion. The catalysed reaction is L-glutamyl-tRNA(Gln) + L-glutamine + ATP + H2O = L-glutaminyl-tRNA(Gln) + L-glutamate + ADP + phosphate + H(+). Its function is as follows. Allows the formation of correctly charged Gln-tRNA(Gln) through the transamidation of misacylated Glu-tRNA(Gln) in the mitochondria. The reaction takes place in the presence of glutamine and ATP through an activated gamma-phospho-Glu-tRNA(Gln). This is Glutamyl-tRNA(Gln) amidotransferase subunit B, mitochondrial from Penicillium rubens (strain ATCC 28089 / DSM 1075 / NRRL 1951 / Wisconsin 54-1255) (Penicillium chrysogenum).